A 130-amino-acid chain; its full sequence is Small ribosomal subunit protein uS9 (130 aa).

Belongs to the universal ribosomal protein uS9 family.

The chain is Small ribosomal subunit protein uS9 from Verminephrobacter eiseniae (strain EF01-2).